The sequence spans 508 residues: Endo-4-O-sulfatase (508 aa).

At serine 84 the chain carries 3-oxoalanine (Ser).

This sequence belongs to the sulfatase family. Post-translationally, the conversion to 3-oxoalanine (also known as C-formylglycine, FGly), of a serine or cysteine residue in prokaryotes and of a cysteine residue in eukaryotes, is critical for catalytic activity.

Endosulfatase involved in the degradation of the glycosaminoglycans (GAGs) chondroitin sulfate (CS) and dermatan sulfate (DS). Efficiently hydrolyzes sulfate groups from a broad range of substrate size, including disaccharide to high molecular weight CS and DS polymers. Has a strict specificity for the 4-O-sulfate groups of galactosamine. GAG-specific sulfatases play a key role in the persistence of the major human gut symbiont B.thetaiotaomicron in the host gastrointestinal tract. The polypeptide is Endo-4-O-sulfatase (Bacteroides thetaiotaomicron (strain ATCC 29148 / DSM 2079 / JCM 5827 / CCUG 10774 / NCTC 10582 / VPI-5482 / E50)).